A 217-amino-acid chain; its full sequence is Small ribosomal subunit protein uS3 (217 aa).

Positions 40–110 constitute a KH type-2 domain; the sequence is IRDLINKWFN…EVYINIHEVR (71 aa).

It belongs to the universal ribosomal protein uS3 family. Part of the 30S ribosomal subunit. Forms a tight complex with proteins S10 and S14.

Functionally, binds the lower part of the 30S subunit head. Binds mRNA in the 70S ribosome, positioning it for translation. The chain is Small ribosomal subunit protein uS3 from Rickettsia prowazekii (strain Madrid E).